We begin with the raw amino-acid sequence, 433 residues long: Probable exopolygalacturonase X (433 aa).

The signal sequence occupies residues 1–21; the sequence is MKLTQATTLLLSLGLSLPVEG. The disordered stretch occupies residues 30–54; the sequence is VGPKPPFRPLPASTPRNKTCQVQSN. A compositionally biased stretch (polar residues) spans 43-54; the sequence is TPRNKTCQVQSN. N-linked (GlcNAc...) asparagine glycosylation is found at N46, N127, and N197. The PbH1 1 repeat unit spans residues 229-250; that stretch reads SSNIVIQNSVINNGDDCVSFKP. D243 acts as the Proton donor in catalysis. C245 and C262 are oxidised to a cystine. N-linked (GlcNAc...) asparagine glycans are attached at residues N251 and N263. The stretch at 252-272 is one PbH1 2 repeat; that stretch reads STEILVQNLHCNGSHGISVGS. The active site involves H266. N-linked (GlcNAc...) asparagine glycans are attached at residues N290, N295, N327, N352, and N362. One copy of the PbH1 3 repeat lies at 325–346; sequence VQNITYDKMYIENVDWAIEVTQ. The stretch at 360 to 403 is one PbH1 4 repeat; it reads PSNLTISDVYFNDLTGVTSGKNDPNVGTIICSSPDVCSGIHATN. C390 and C396 are disulfide-bonded.

Belongs to the glycosyl hydrolase 28 family.

Its subcellular location is the secreted. It carries out the reaction [(1-&gt;4)-alpha-D-galacturonosyl](n) + H2O = alpha-D-galacturonate + [(1-&gt;4)-alpha-D-galacturonosyl](n-1). In terms of biological role, specific in hydrolyzing the terminal glycosidic bond of polygalacturonic acid and oligogalacturonates. This Aspergillus flavus (strain ATCC 200026 / FGSC A1120 / IAM 13836 / NRRL 3357 / JCM 12722 / SRRC 167) protein is Probable exopolygalacturonase X (pgaX).